The chain runs to 216 residues: GTPase IMAP family member GIMD1 (216 aa).

Residues 5–216 enclose the AIG1-type G domain; it reads KMIINLAVLG…ENHFQVLSFT (212 aa). Residues 14–22, Ser35, and 147–149 contribute to the GTP site; these read GKTQSGKSS and HAE.

This sequence belongs to the TRAFAC class TrmE-Era-EngA-EngB-Septin-like GTPase superfamily. AIG1/Toc34/Toc159-like paraseptin GTPase family. IAN subfamily.

This chain is GTPase IMAP family member GIMD1 (Gimd1), found in Rattus norvegicus (Rat).